Reading from the N-terminus, the 135-residue chain is Small ribosomal subunit protein bS16m (135 aa).

The N-terminal 34 residues, 1 to 34 (MVQLTTVLCKAYRGGHLTIRLALGGCTNRPFYRI), are a transit peptide targeting the mitochondrion. Residue Thr130 is modified to Phosphothreonine.

It belongs to the bacterial ribosomal protein bS16 family. Component of the mitochondrial ribosome small subunit (28S) which comprises a 12S rRNA and about 30 distinct proteins.

The protein localises to the mitochondrion. In Bos taurus (Bovine), this protein is Small ribosomal subunit protein bS16m (MRPS16).